Consider the following 137-residue polypeptide: Large ribosomal subunit protein uL16 (137 aa).

This sequence belongs to the universal ribosomal protein uL16 family. Part of the 50S ribosomal subunit.

Functionally, binds 23S rRNA and is also seen to make contacts with the A and possibly P site tRNAs. This Oleidesulfovibrio alaskensis (strain ATCC BAA-1058 / DSM 17464 / G20) (Desulfovibrio alaskensis) protein is Large ribosomal subunit protein uL16.